We begin with the raw amino-acid sequence, 185 residues long: Potassium-transporting ATPase KdpC subunit (185 aa).

A helical membrane pass occupies residues 8-28 (LGLVLIMFVLCGFIFPLTVTA). A disordered region spans residues 113 to 132 (GQKLSSDAVTTSGSGLDPDI). The segment covering 114 to 126 (QKLSSDAVTTSGS) has biased composition (polar residues).

This sequence belongs to the KdpC family. As to quaternary structure, the system is composed of three essential subunits: KdpA, KdpB and KdpC.

Its subcellular location is the cell membrane. Its function is as follows. Part of the high-affinity ATP-driven potassium transport (or Kdp) system, which catalyzes the hydrolysis of ATP coupled with the electrogenic transport of potassium into the cytoplasm. This subunit acts as a catalytic chaperone that increases the ATP-binding affinity of the ATP-hydrolyzing subunit KdpB by the formation of a transient KdpB/KdpC/ATP ternary complex. This is Potassium-transporting ATPase KdpC subunit from Staphylococcus haemolyticus (strain JCSC1435).